An 800-amino-acid chain; its full sequence is Phenylalanine--tRNA ligase beta subunit (800 aa).

In terms of domain architecture, tRNA-binding spans 39–147 (FDAIADIVVG…QDSVPGVRLV (109 aa)). A B5 domain is found at 401-477 (WQAAQLRFRP…RVYGMDNIPP (77 aa)). Positions 455, 461, 464, and 465 each coordinate Mg(2+). The FDX-ACB domain occupies 706-800 (PVFPPVKRDI…SLTEALGVRI (95 aa)).

It belongs to the phenylalanyl-tRNA synthetase beta subunit family. Type 1 subfamily. In terms of assembly, tetramer of two alpha and two beta subunits. The cofactor is Mg(2+).

It is found in the cytoplasm. The catalysed reaction is tRNA(Phe) + L-phenylalanine + ATP = L-phenylalanyl-tRNA(Phe) + AMP + diphosphate + H(+). This Oleidesulfovibrio alaskensis (strain ATCC BAA-1058 / DSM 17464 / G20) (Desulfovibrio alaskensis) protein is Phenylalanine--tRNA ligase beta subunit.